We begin with the raw amino-acid sequence, 648 residues long: Serine/threonine-protein kinase plk-1 (648 aa).

The disordered stretch occupies residues 1-24; the sequence is MNRLPNIAKPPQKSNQRKEKAPPE. The 252-residue stretch at 38–289 folds into the Protein kinase domain; the sequence is YEKGRFLGKG…AKQVQRDGFF (252 aa). Residues 44-52 and Lys67 contribute to the ATP site; that span reads LGKGGFAHC. Residue Asp161 is the Proton acceptor of the active site. 2 consecutive POLO box domains span residues 412–492 and 514–596; these read WISK…YMND and TLRV…RLMS. Positions 612 to 629 are enriched in low complexity; sequence PRSMAAARSASAGSRGPN.

The protein belongs to the protein kinase superfamily. Ser/Thr protein kinase family. CDC5/Polo subfamily. As to quaternary structure, interacts with mex-5, mex-6 and spat-1. As to expression, embryos.

The protein localises to the cytoplasm. It is found in the cytoskeleton. Its subcellular location is the microtubule organizing center. It localises to the centrosome. The protein resides in the midbody. The protein localises to the nucleus. It is found in the chromosome. Its subcellular location is the centromere. It localises to the kinetochore. The catalysed reaction is L-seryl-[protein] + ATP = O-phospho-L-seryl-[protein] + ADP + H(+). The enzyme catalyses L-threonyl-[protein] + ATP = O-phospho-L-threonyl-[protein] + ADP + H(+). Required for oocyte nuclear envelope breakdown before entry of oocyte into spermatheca. In meiotic cells, required for spindle dynamics and probably for spindle attachment to the chromosomes. Zygotic role in the development of the germline and nerve cord. In mitotic cells, plays a role in spindle organization and centrosome maturation. Involved in asymmetric nuclear localization of cdc-25.1 during embryogenesis which affects cell division timing. Together with plk-2, regulates cytoplasm polarity in early embryos. May play a minor role in chromosome pairing and synapsis during oocyte meiosis I. In Caenorhabditis elegans, this protein is Serine/threonine-protein kinase plk-1 (plk-1).